The chain runs to 384 residues: Probable splicing factor YJU2B (384 aa).

Positions 1-28 are disordered; sequence MGERKGTNKYYPPDFDPAKHGSLNGYRN. Residues 183-212 are a coiled coil; the sequence is NSLLRSKFREEKKQIKEEEERDQALLTKAS. The tract at residues 275 to 331 is disordered; the sequence is GIRTKTPSVPGISPVSLGVVRRTSKEENKAEDKSVESPDGSRSRKAEGMCRKEETGC. Residues 297–331 show a composition bias toward basic and acidic residues; the sequence is TSKEENKAEDKSVESPDGSRSRKAEGMCRKEETGC.

It belongs to the CWC16 family.

Its subcellular location is the nucleus. Its function is as follows. May be involved in mRNA splicing. The sequence is that of Probable splicing factor YJU2B (yju2b) from Xenopus laevis (African clawed frog).